The sequence spans 163 residues: Intron-encoded endonuclease I-PpoI (163 aa).

Homodimer. Zn(2+) serves as cofactor.

Mediates the homing of a group I intron in the ribosomal DNA. Makes a four-base staggered cut in its ribosomal DNA target sequence. This Physarum polycephalum (Slime mold) protein is Intron-encoded endonuclease I-PpoI.